The sequence spans 200 residues: MLAFCRSSLKSKKYFIILLALAAIAGLGTHAAWSSNGLPRIDNKTLARLAQQHPVVVLFRHAERCDRSTNQCLSDKTGITVKGTQDARELGNAFSADIPDFNLYSSNTVRTIQSATWFSAGKKLTVDKRFLQCGNEIYSAIKDLQRKAPDKNIVIFTHNHCLTYIAKDKRDATFKPDYLDGLVMHVEKGKVYLDGEFVNH.

The N-terminal stretch at methionine 1–alanine 25 is a signal peptide.

Belongs to the phosphoglycerate mutase family. Ais subfamily.

The protein localises to the periplasm. It functions in the pathway bacterial outer membrane biogenesis; lipopolysaccharide metabolism. Functionally, catalyzes the dephosphorylation of heptose(II) of the outer membrane lipopolysaccharide core. This chain is Lipopolysaccharide core heptose(II)-phosphate phosphatase, found in Escherichia coli O6:K15:H31 (strain 536 / UPEC).